The sequence spans 343 residues: Dihydroorotate dehydrogenase (quinone) (343 aa).

Residues A61–K65 and T85 each bind FMN. Position 65 (K65) interacts with substrate. N110 to F114 is a binding site for substrate. N138 and N171 together coordinate FMN. Residue N171 participates in substrate binding. The active-site Nucleophile is the S174. N176 lines the substrate pocket. FMN is bound by residues K216 and T244. N245–T246 provides a ligand contact to substrate. Residues G267, G296, and Y317–S318 each bind FMN.

The protein belongs to the dihydroorotate dehydrogenase family. Type 2 subfamily. In terms of assembly, monomer. The cofactor is FMN.

It localises to the cell membrane. It carries out the reaction (S)-dihydroorotate + a quinone = orotate + a quinol. Its pathway is pyrimidine metabolism; UMP biosynthesis via de novo pathway; orotate from (S)-dihydroorotate (quinone route): step 1/1. Its function is as follows. Catalyzes the conversion of dihydroorotate to orotate with quinone as electron acceptor. The polypeptide is Dihydroorotate dehydrogenase (quinone) (Pseudomonas syringae pv. syringae (strain B728a)).